The primary structure comprises 379 residues: tRNA-specific 2-thiouridylase MnmA (379 aa).

ATP-binding positions include Ala-6–Ser-13 and Leu-32. The active-site Nucleophile is the Cys-101. A disulfide bridge connects residues Cys-101 and Cys-199. Gly-125 is an ATP binding site. Residues Lys-148–Gln-150 form an interaction with tRNA region. Residue Cys-199 is the Cysteine persulfide intermediate of the active site.

Belongs to the MnmA/TRMU family.

Its subcellular location is the cytoplasm. The catalysed reaction is S-sulfanyl-L-cysteinyl-[protein] + uridine(34) in tRNA + AH2 + ATP = 2-thiouridine(34) in tRNA + L-cysteinyl-[protein] + A + AMP + diphosphate + H(+). Its function is as follows. Catalyzes the 2-thiolation of uridine at the wobble position (U34) of tRNA, leading to the formation of s(2)U34. This is tRNA-specific 2-thiouridylase MnmA from Paenarthrobacter aurescens (strain TC1).